Reading from the N-terminus, the 450-residue chain is ATP-dependent protease ATPase subunit HslU (450 aa).

Residues Val29, 71-76, Asp261, Glu328, and Arg400 each bind ATP; that span reads GVGKTE.

The protein belongs to the ClpX chaperone family. HslU subfamily. A double ring-shaped homohexamer of HslV is capped on each side by a ring-shaped HslU homohexamer. The assembly of the HslU/HslV complex is dependent on binding of ATP.

The protein localises to the cytoplasm. Functionally, ATPase subunit of a proteasome-like degradation complex; this subunit has chaperone activity. The binding of ATP and its subsequent hydrolysis by HslU are essential for unfolding of protein substrates subsequently hydrolyzed by HslV. HslU recognizes the N-terminal part of its protein substrates and unfolds these before they are guided to HslV for hydrolysis. This chain is ATP-dependent protease ATPase subunit HslU, found in Rickettsia canadensis (strain McKiel).